The primary structure comprises 357 residues: 3-dehydroquinate synthase (357 aa).

NAD(+) contacts are provided by residues 126 to 127 (TT), Lys139, and Lys148. Residues Glu181, His244, and His261 each contribute to the Zn(2+) site.

It belongs to the sugar phosphate cyclases superfamily. Dehydroquinate synthase family. Requires Co(2+) as cofactor. Zn(2+) serves as cofactor. NAD(+) is required as a cofactor.

It is found in the cytoplasm. It carries out the reaction 7-phospho-2-dehydro-3-deoxy-D-arabino-heptonate = 3-dehydroquinate + phosphate. It functions in the pathway metabolic intermediate biosynthesis; chorismate biosynthesis; chorismate from D-erythrose 4-phosphate and phosphoenolpyruvate: step 2/7. Functionally, catalyzes the conversion of 3-deoxy-D-arabino-heptulosonate 7-phosphate (DAHP) to dehydroquinate (DHQ). The chain is 3-dehydroquinate synthase from Solibacter usitatus (strain Ellin6076).